Consider the following 206-residue polypeptide: Reticulon-like protein B13 (206 aa).

The Reticulon domain maps to 16–206; the sequence is VEDIYLWRRK…GTEEKVKKSE (191 aa). A run of 3 helical transmembrane segments spans residues 27–47, 50–70, and 134–154; these read LAFSTLLVSTSTWILLSFYGF, ITIVSWIGIAVVSMIFLWGSL, and IGNLLDFHTCLFIGLVMGLTV.

The protein localises to the endoplasmic reticulum membrane. This is Reticulon-like protein B13 (RTNLB13) from Arabidopsis thaliana (Mouse-ear cress).